The sequence spans 306 residues: tRNA dimethylallyltransferase (306 aa).

An ATP-binding site is contributed by 14 to 21; sequence GPTAAGKS. Position 16–21 (16–21) interacts with substrate; that stretch reads TAAGKS. Residues 39–42 are interaction with substrate tRNA; the sequence is DSRL.

This sequence belongs to the IPP transferase family. Monomer. Mg(2+) is required as a cofactor.

It catalyses the reaction adenosine(37) in tRNA + dimethylallyl diphosphate = N(6)-dimethylallyladenosine(37) in tRNA + diphosphate. In terms of biological role, catalyzes the transfer of a dimethylallyl group onto the adenine at position 37 in tRNAs that read codons beginning with uridine, leading to the formation of N6-(dimethylallyl)adenosine (i(6)A). The protein is tRNA dimethylallyltransferase of Synechococcus sp. (strain ATCC 27144 / PCC 6301 / SAUG 1402/1) (Anacystis nidulans).